Here is a 284-residue protein sequence, read N- to C-terminus: Bifunctional protein FolD 1 (284 aa).

NADP(+)-binding positions include 166–168 and I232; that span reads GAS.

Belongs to the tetrahydrofolate dehydrogenase/cyclohydrolase family. As to quaternary structure, homodimer.

The catalysed reaction is (6R)-5,10-methylene-5,6,7,8-tetrahydrofolate + NADP(+) = (6R)-5,10-methenyltetrahydrofolate + NADPH. It carries out the reaction (6R)-5,10-methenyltetrahydrofolate + H2O = (6R)-10-formyltetrahydrofolate + H(+). Its pathway is one-carbon metabolism; tetrahydrofolate interconversion. Catalyzes the oxidation of 5,10-methylenetetrahydrofolate to 5,10-methenyltetrahydrofolate and then the hydrolysis of 5,10-methenyltetrahydrofolate to 10-formyltetrahydrofolate. In Pseudomonas savastanoi pv. phaseolicola (strain 1448A / Race 6) (Pseudomonas syringae pv. phaseolicola (strain 1448A / Race 6)), this protein is Bifunctional protein FolD 1.